The chain runs to 180 residues: MSRIGRKSIPVPTGVDVTIAGQTVTVKGPKGELSHTIAEPITIDRAEDGQLNVARPNDERKAKELHGLSRTLVANMIVGVTEGYRKSLEIAGTGYRVTAKGKDLEFALGFSHPVTVVAPEGITFSVEKPTLFHVAGINKQLVGEVAANIRKIRPPEPYKGKGVKYQGEVIRRKAGKAGKK.

It belongs to the universal ribosomal protein uL6 family. In terms of assembly, part of the 50S ribosomal subunit.

Functionally, this protein binds to the 23S rRNA, and is important in its secondary structure. It is located near the subunit interface in the base of the L7/L12 stalk, and near the tRNA binding site of the peptidyltransferase center. This chain is Large ribosomal subunit protein uL6, found in Salinispora tropica (strain ATCC BAA-916 / DSM 44818 / JCM 13857 / NBRC 105044 / CNB-440).